A 434-amino-acid polypeptide reads, in one-letter code: Zinc carboxypeptidase (434 aa).

Positions 1–33 are cleaved as a signal peptide; sequence MSPKRRRLMAAALGACVALVLPLHAGSAQPSTA. A propeptide spans 34–114 (activation peptide); the sequence is KTPERTVFEV…DFTDPQVGTQ (81 aa). The region spanning 122–423 is the Peptidase M14 domain; that stretch reads GYHNFQETVT…SAVELFLSYS (302 aa). Positions 183 and 186 each coordinate Zn(2+). Positions 270-295 are disordered; it reads GSSSSGSSETTAARRRSPPRRSPHPH. Residues 282 to 293 show a composition bias toward basic residues; sequence ARRRSPPRRSPH. His315 contributes to the Zn(2+) binding site. The active-site Proton donor/acceptor is Glu388.

This sequence belongs to the peptidase M14 family. It depends on Zn(2+) as a cofactor.

It carries out the reaction Releases a C-terminal residue, which may be hydrophobic or positively charged.. Functionally, carboxypeptidase that possesses the specificities of both mammalian Cpase A and B. Thus shows broad substrate specificity, being able to cleave Cbz-Gly-Leu, Cbz-Gly-Val, Cbz-Gly-Phe, Cbz-Gly-Lys and Bz-Gly-Arg in vitro. The sequence is that of Zinc carboxypeptidase from Saccharothrix mutabilis subsp. capreolus (Streptomyces capreolus).